The chain runs to 175 residues: Large ribosomal subunit protein uL22y (175 aa).

Residues 153–163 (EKEEPVKKEPE) show a composition bias toward basic and acidic residues. Positions 153–175 (EKEEPVKKEPETQLAAKSKKSAA) are disordered.

This sequence belongs to the universal ribosomal protein uL22 family.

This chain is Large ribosomal subunit protein uL22y (RPL17B), found in Arabidopsis thaliana (Mouse-ear cress).